A 251-amino-acid chain; its full sequence is Pyrroloquinoline-quinone synthase (251 aa).

This sequence belongs to the PqqC family.

It catalyses the reaction 6-(2-amino-2-carboxyethyl)-7,8-dioxo-1,2,3,4,7,8-hexahydroquinoline-2,4-dicarboxylate + 3 O2 = pyrroloquinoline quinone + 2 H2O2 + 2 H2O + H(+). The protein operates within cofactor biosynthesis; pyrroloquinoline quinone biosynthesis. In terms of biological role, ring cyclization and eight-electron oxidation of 3a-(2-amino-2-carboxyethyl)-4,5-dioxo-4,5,6,7,8,9-hexahydroquinoline-7,9-dicarboxylic-acid to PQQ. The protein is Pyrroloquinoline-quinone synthase of Klebsiella pneumoniae (strain 342).